The following is a 166-amino-acid chain: Cytochrome b (166 aa).

A run of 4 helical transmembrane segments spans residues 15 to 35 (FKDIVGFIVMIFLLISLVLIN), 77 to 97 (LGGVIALVLSIAILMILPFYN), 109 to 129 (INQILFWIMLVTVILLTWIGA), and 136 to 156 (YVLLGQILTVIYFLYYLINPL).

It belongs to the cytochrome b family. The main subunits of complex b-c1 are: cytochrome b, cytochrome c1 and the Rieske protein. The cofactor is heme.

Its subcellular location is the mitochondrion inner membrane. In terms of biological role, component of the ubiquinol-cytochrome c reductase complex (complex III or cytochrome b-c1 complex) that is part of the mitochondrial respiratory chain. The b-c1 complex mediates electron transfer from ubiquinol to cytochrome c. Contributes to the generation of a proton gradient across the mitochondrial membrane that is then used for ATP synthesis. The protein is Cytochrome b (mt:Cyt-b) of Drosophila subobscura (Fruit fly).